The sequence spans 502 residues: Cytochrome P450 71B10 (502 aa).

Residues 1–21 traverse the membrane as a helical segment; it reads MTVLWFVSLILLISILLVAVK. C443 is a heme binding site.

Belongs to the cytochrome P450 family. The cofactor is heme.

Its subcellular location is the membrane. This Arabidopsis thaliana (Mouse-ear cress) protein is Cytochrome P450 71B10 (CYP71B10).